The following is a 427-amino-acid chain: Glutamate-1-semialdehyde 2,1-aminomutase (427 aa).

Lysine 265 is subject to N6-(pyridoxal phosphate)lysine.

This sequence belongs to the class-III pyridoxal-phosphate-dependent aminotransferase family. HemL subfamily. As to quaternary structure, homodimer. Pyridoxal 5'-phosphate is required as a cofactor.

The protein localises to the cytoplasm. It catalyses the reaction (S)-4-amino-5-oxopentanoate = 5-aminolevulinate. The protein operates within porphyrin-containing compound metabolism; protoporphyrin-IX biosynthesis; 5-aminolevulinate from L-glutamyl-tRNA(Glu): step 2/2. The sequence is that of Glutamate-1-semialdehyde 2,1-aminomutase from Burkholderia orbicola (strain MC0-3).